We begin with the raw amino-acid sequence, 354 residues long: MEQCYNRGCGQLFDPQTNNDESCRHHPGEPFFHDAYKGWSCCNKKSVDFTEFLNIKGCTLAKHSNVKPPEPEKPVKDESDKDEVIEVRAPIREALPRPPIDSPLTVIQPTVAPALKDMVFAVKTPAAQKSSDAIEVGTTCKNNGCTYSFTGNSSDFGECTYHPGVPIFHEGMKFWSCCQKRTSDFSQFMAQKGCTYGEHKWVKENDDKKVVQCRYDWHQTATNVVMAIYAKKYDYSQSVIELNPIRLHVNLVFPEQDNARFDLDLELRGIVNVSNASAHMYGTKVEIKLPKLEPGSWSNLNFPNKKLPVVKKSQVEEKKKQEESDEEFFDLDDIKAETSFRLSEMSMQSPNNLD.

16 residues coordinate Zn(2+): Cys-4, Cys-9, Cys-23, His-26, Cys-41, Cys-42, Cys-58, His-63, Cys-140, Cys-145, Cys-159, His-162, Cys-177, Cys-178, Cys-194, and His-199. CHORD domains follow at residues 4–63 and 140–199; these read CYNR…LAKH and CKNN…YGEH. Positions 210-301 constitute a CS domain; it reads VVQCRYDWHQ…LEPGSWSNLN (92 aa). A phosphoserine mark is found at Ser-324 and Ser-339.

In terms of assembly, interacts with Hsp83.

It is found in the cytoplasm. The protein localises to the nucleus. Its subcellular location is the cytoskeleton. It localises to the spindle. Its function is as follows. Regulates centrosome duplication and mitotic spindle dynamics. Also involved in controlling the size of dendritic arbors. May act as co-chaperone for Hsp83. During mitotic spindle assembly, regulates microtubule (MT) dynamics by binding to MTs and promoting MT polymerisation. Promotes the elongation and retraction of terminal branches in response to changes in body size, possibly acting downstream of the TORC2 pathway to enable proportional scaling of dendritic arbors. The protein is Cysteine and histidine-rich domain-containing protein morgana of Drosophila melanogaster (Fruit fly).